Reading from the N-terminus, the 387-residue chain is Methylthioribose-1-phosphate isomerase (387 aa).

The active-site Proton donor is the D257.

Belongs to the eIF-2B alpha/beta/delta subunits family. MtnA subfamily.

The protein resides in the cytoplasm. It localises to the nucleus. It catalyses the reaction 5-(methylsulfanyl)-alpha-D-ribose 1-phosphate = 5-(methylsulfanyl)-D-ribulose 1-phosphate. The protein operates within amino-acid biosynthesis; L-methionine biosynthesis via salvage pathway; L-methionine from S-methyl-5-thio-alpha-D-ribose 1-phosphate: step 1/6. Its function is as follows. Catalyzes the interconversion of methylthioribose-1-phosphate (MTR-1-P) into methylthioribulose-1-phosphate (MTRu-1-P). The polypeptide is Methylthioribose-1-phosphate isomerase (mri1) (Aspergillus fumigatus (strain CBS 144.89 / FGSC A1163 / CEA10) (Neosartorya fumigata)).